The primary structure comprises 300 residues: Ribonuclease HIII (300 aa).

Positions 86-300 (RPRLGVDESG…FYEICDSTDI (215 aa)) constitute an RNase H type-2 domain. A divalent metal cation contacts are provided by D92, E93, and D196.

Belongs to the RNase HII family. RnhC subfamily. The cofactor is Mn(2+). It depends on Mg(2+) as a cofactor.

It is found in the cytoplasm. It carries out the reaction Endonucleolytic cleavage to 5'-phosphomonoester.. Functionally, endonuclease that specifically degrades the RNA of RNA-DNA hybrids. The polypeptide is Ribonuclease HIII (Chlamydia abortus (strain DSM 27085 / S26/3) (Chlamydophila abortus)).